Consider the following 382-residue polypeptide: Queuine tRNA-ribosyltransferase (382 aa).

Aspartate 93 functions as the Proton acceptor in the catalytic mechanism. Residues 93–97, aspartate 147, glutamine 191, and glycine 218 each bind substrate; that span reads DSGGF. Residues 249 to 255 form an RNA binding region; sequence GVGKPED. The Nucleophile role is filled by aspartate 268. The tract at residues 273 to 277 is RNA binding; important for wobble base 34 recognition; that stretch reads TRNAR. Residues cysteine 306, cysteine 308, cysteine 311, and histidine 337 each contribute to the Zn(2+) site.

The protein belongs to the queuine tRNA-ribosyltransferase family. As to quaternary structure, homodimer. Within each dimer, one monomer is responsible for RNA recognition and catalysis, while the other monomer binds to the replacement base PreQ1. Zn(2+) is required as a cofactor.

The enzyme catalyses 7-aminomethyl-7-carbaguanine + guanosine(34) in tRNA = 7-aminomethyl-7-carbaguanosine(34) in tRNA + guanine. Its pathway is tRNA modification; tRNA-queuosine biosynthesis. Functionally, catalyzes the base-exchange of a guanine (G) residue with the queuine precursor 7-aminomethyl-7-deazaguanine (PreQ1) at position 34 (anticodon wobble position) in tRNAs with GU(N) anticodons (tRNA-Asp, -Asn, -His and -Tyr). Catalysis occurs through a double-displacement mechanism. The nucleophile active site attacks the C1' of nucleotide 34 to detach the guanine base from the RNA, forming a covalent enzyme-RNA intermediate. The proton acceptor active site deprotonates the incoming PreQ1, allowing a nucleophilic attack on the C1' of the ribose to form the product. After dissociation, two additional enzymatic reactions on the tRNA convert PreQ1 to queuine (Q), resulting in the hypermodified nucleoside queuosine (7-(((4,5-cis-dihydroxy-2-cyclopenten-1-yl)amino)methyl)-7-deazaguanosine). This is Queuine tRNA-ribosyltransferase from Actinobacillus pleuropneumoniae serotype 3 (strain JL03).